A 170-amino-acid polypeptide reads, in one-letter code: Lipoprotein signal peptidase (170 aa).

Helical transmembrane passes span 11-31, 41-61, 69-89, and 95-115; these read LGWL…KAHF, IVVI…AAFS, WQRW…VVWL, and DDTW…GNLY. Residues aspartate 125 and aspartate 144 contribute to the active site. Residues 136–156 form a helical membrane-spanning segment; that stretch reads YFPAFNFADSAITVGAIMLAL.

It belongs to the peptidase A8 family.

It is found in the cell inner membrane. It carries out the reaction Release of signal peptides from bacterial membrane prolipoproteins. Hydrolyzes -Xaa-Yaa-Zaa-|-(S,diacylglyceryl)Cys-, in which Xaa is hydrophobic (preferably Leu), and Yaa (Ala or Ser) and Zaa (Gly or Ala) have small, neutral side chains.. Its pathway is protein modification; lipoprotein biosynthesis (signal peptide cleavage). This protein specifically catalyzes the removal of signal peptides from prolipoproteins. This chain is Lipoprotein signal peptidase, found in Pseudomonas fluorescens.